A 338-amino-acid polypeptide reads, in one-letter code: Lipoate-protein ligase A (338 aa).

The 188-residue stretch at 29–216 folds into the BPL/LPL catalytic domain; that stretch reads PATQRVLFLW…AFFAHYGERV (188 aa). Residues R71, 76 to 79, and K134 each bind ATP; that span reads GAVF. Position 134 (K134) interacts with (R)-lipoate.

It belongs to the LplA family. As to quaternary structure, monomer.

It is found in the cytoplasm. It catalyses the reaction L-lysyl-[lipoyl-carrier protein] + (R)-lipoate + ATP = N(6)-[(R)-lipoyl]-L-lysyl-[lipoyl-carrier protein] + AMP + diphosphate + H(+). It participates in protein modification; protein lipoylation via exogenous pathway; protein N(6)-(lipoyl)lysine from lipoate: step 1/2. It functions in the pathway protein modification; protein lipoylation via exogenous pathway; protein N(6)-(lipoyl)lysine from lipoate: step 2/2. Catalyzes both the ATP-dependent activation of exogenously supplied lipoate to lipoyl-AMP and the transfer of the activated lipoyl onto the lipoyl domains of lipoate-dependent enzymes. This chain is Lipoate-protein ligase A, found in Salmonella paratyphi C (strain RKS4594).